Consider the following 274-residue polypeptide: Large ribosomal subunit protein uL2cz/uL2cy (274 aa).

Disordered regions lie at residues 1 to 25 (MAIH…VKSN) and 224 to 274 (NPVD…RRSK).

This sequence belongs to the universal ribosomal protein uL2 family. Part of the 50S ribosomal subunit.

Its subcellular location is the plastid. The protein localises to the chloroplast. The sequence is that of Large ribosomal subunit protein uL2cz/uL2cy (rpl2-A) from Aethionema cordifolium (Lebanon stonecress).